Here is a 275-residue protein sequence, read N- to C-terminus: Polyamine aminopropyltransferase (275 aa).

A PABS domain is found at 2–235 (EFWFTEKQTE…GMWTFTIGSK (234 aa)). Residue Q31 participates in S-methyl-5'-thioadenosine binding. Residues H62 and D86 each contribute to the spermidine site. S-methyl-5'-thioadenosine-binding positions include D106 and 137-138 (DG). The Proton acceptor role is filled by D155. 155–158 (DSTE) serves as a coordination point for spermidine. S-methyl-5'-thioadenosine is bound at residue P162.

The protein belongs to the spermidine/spermine synthase family. Homodimer or homotetramer.

The protein localises to the cytoplasm. It catalyses the reaction S-adenosyl 3-(methylsulfanyl)propylamine + putrescine = S-methyl-5'-thioadenosine + spermidine + H(+). Its pathway is amine and polyamine biosynthesis; spermidine biosynthesis; spermidine from putrescine: step 1/1. Catalyzes the irreversible transfer of a propylamine group from the amino donor S-adenosylmethioninamine (decarboxy-AdoMet) to putrescine (1,4-diaminobutane) to yield spermidine. This Shouchella clausii (strain KSM-K16) (Alkalihalobacillus clausii) protein is Polyamine aminopropyltransferase.